The following is a 147-amino-acid chain: MKLFELQPAPGSKKLPNRKGRGIGSGNGKTGGRGHKGQNARAGGGVRPGFEGGQMPLYMRLPKRGFNNYEFSKKYTEVNVSDLNIFDEGTVVTEELLKSSGLAKKIIDGVAILGNGELTKKLTVQATKFTKTATEKIEAAGGKVEVV.

The disordered stretch occupies residues 1-54; that stretch reads MKLFELQPAPGSKKLPNRKGRGIGSGNGKTGGRGHKGQNARAGGGVRPGFEGGQ. Gly residues-rich tracts occupy residues 22-31 and 42-52; these read GIGSGNGKTG and AGGGVRPGFEG.

It belongs to the universal ribosomal protein uL15 family. As to quaternary structure, part of the 50S ribosomal subunit.

Its function is as follows. Binds to the 23S rRNA. The polypeptide is Large ribosomal subunit protein uL15 (Ruminiclostridium cellulolyticum (strain ATCC 35319 / DSM 5812 / JCM 6584 / H10) (Clostridium cellulolyticum)).